The chain runs to 263 residues: L-histidine 2-aminobutanoyltransferase (263 aa).

Belongs to the methyltransferase superfamily. CntL family. Interacts with CntM.

It carries out the reaction L-histidine + S-adenosyl-L-methionine = (2S)-2-amino-4-{[(1S)-1-carboxy-2-(1H-imidazol-4-yl)ethyl]amino}butanoate + S-methyl-5'-thioadenosine + H(+). Functionally, catalyzes the nucleophilic attack of one alpha-aminobutanoate moiety from SAM onto L-histidine to produce the intermediate (2S)-2-amino-4-{[(1S)-1-carboxy-2-(1H-imidazol-4-yl)ethyl]amino}butanoate. Functions in the biosynthesis of the metallophore pseudopaline, which is involved in the acquisition of nickel and zinc, and thus enables bacterial growth inside the host, where metal access is limited. Therefore, this enzyme probably contributes to Pseudomonas virulence. Cannot use D-histidine in place of L-histidine as substrate. The polypeptide is L-histidine 2-aminobutanoyltransferase (Pseudomonas aeruginosa (strain UCBPP-PA14)).